A 401-amino-acid polypeptide reads, in one-letter code: Carboxybiotin decarboxylase (401 aa).

10 consecutive transmembrane segments (helical) span residues 20–40, 46–66, 70–90, 107–127, 131–151, 173–193, 244–264, 275–295, 306–326, and 380–400; these read VISI…YFGF, PLIM…VLFL, VVGT…VNLM, LIAC…FILI, ASII…IIGI, MVLF…AIIA, LCLL…GIAI, LLET…LGAL, ISLI…GGVL, and VCGL…LFLL.

The protein localises to the cell membrane. It carries out the reaction N(6)-carboxybiotinyl-L-lysyl-[protein] + n Na(+)(in) + H(+) = N(6)-biotinyl-L-lysyl-[protein] + n Na(+)(out) + CO2. In terms of biological role, beta subunit of the biotin-dependent malonate decarboxylase multienzyme complex (EC 7.2.4.4). Acts as an integral membrane-bound carboxybiotin protein decarboxylase by releasing the carboxyl group of the carboxylated biotin carrier MADF. The free energy of the decarboxylation reaction is used to pump Na(+) out of the cell. In Malonomonas rubra, this protein is Carboxybiotin decarboxylase (madB).